The following is a 356-amino-acid chain: NADH-quinone oxidoreductase subunit H (356 aa).

The next 8 membrane-spanning stretches (helical) occupy residues 18–38, 87–107, 120–140, 166–186, 205–225, 265–285, 292–312, and 333–353; these read IVMI…IAYI, GVFL…WAVI, VGIL…IMAG, IGFV…SAVV, ILNW…VSAL, AITT…LPPI, WVPG…LIAM, and FLPL…FAGI.

It belongs to the complex I subunit 1 family. NDH-1 is composed of 14 different subunits. Subunits NuoA, H, J, K, L, M, N constitute the membrane sector of the complex.

The protein localises to the cell inner membrane. It catalyses the reaction a quinone + NADH + 5 H(+)(in) = a quinol + NAD(+) + 4 H(+)(out). Functionally, NDH-1 shuttles electrons from NADH, via FMN and iron-sulfur (Fe-S) centers, to quinones in the respiratory chain. The immediate electron acceptor for the enzyme in this species is believed to be ubiquinone. Couples the redox reaction to proton translocation (for every two electrons transferred, four hydrogen ions are translocated across the cytoplasmic membrane), and thus conserves the redox energy in a proton gradient. This subunit may bind ubiquinone. The sequence is that of NADH-quinone oxidoreductase subunit H from Bradyrhizobium sp. (strain BTAi1 / ATCC BAA-1182).